The primary structure comprises 706 residues: MGRKVTVATCALNQWALDFEGNLQRILKSIEIAKNRGARYRLGPELEICGYGCWDHYYESDTLLHSFQVLAALVESPVTQDIICDVGMPVMHRNVRYNCRVIFLNRKILLIRPKMALANEGNYRELRWFTPWSRSRHTEEYFLPRMIQDLTKQETVPFGDAVLVTWDTCIGSEICEELWTPHSPHIDMGLDGVEIITNASGSHQVLRKANTRVDLVTMVTSKNGGIYLLANQKGCDGDRLYYDGCAMIAMNGSVFAQGSQFSLDDVEVLTATLDLEDVRSYRAEISSRNLAASRASPYPRVKVDFALSCHEDLLAPISEPIEWKYHSPEEEISLGPACWLWDFLRRSQQAGFLLPLSGGVDSAATACLIYSMCCQVCEAVRSGNEEVLADVRTIVNQISYTPQDPRDLCGRILTTCYMASKNSSQETCTRARELAQQIGSHHISLNIDPAVKAVMGIFSLVTGKSPLFAAHGGSSRENLALQNVQARIRMVLAYLFAQLSLWSRGVHGGLLVLGSANVDESLLGYLTKYDCSSADINPIGGISKTDLRAFVQFCIQRFQLPALQSILLAPATAELEPLADGQVSQTDEEDMGMTYAELSVYGKLRKVAKMGPYSMFCKLLGMWRHICTPRQVADKVKRFFSKYSMNRHKMTTLTPAYHAENYSPEDNRFDLRPFLYNTSWPWQFRCIENQVLQLERAEPQSLDGVD.

One can recognise a CN hydrolase domain in the interval 5-275; that stretch reads VTVATCALNQ…VEVLTATLDL (271 aa). Glu45 acts as the Proton acceptor; for glutaminase activity in catalysis. Lys114 (for glutaminase activity) is an active-site residue. Cys175 functions as the Nucleophile; for glutaminase activity in the catalytic mechanism. Residues 325–706 are ligase; the sequence is YHSPEEEISL…AEPQSLDGVD (382 aa). Residue 355–362 coordinates ATP; that stretch reads PLSGGVDS. Residue Ser357 is part of the active site.

It in the C-terminal section; belongs to the NAD synthetase family. Homohexamer.

The enzyme catalyses deamido-NAD(+) + L-glutamine + ATP + H2O = L-glutamate + AMP + diphosphate + NAD(+) + H(+). The protein operates within cofactor biosynthesis; NAD(+) biosynthesis; NAD(+) from deamido-NAD(+) (L-Gln route): step 1/1. In terms of biological role, catalyzes the final step of the nicotinamide adenine dinucleotide (NAD) de novo synthesis pathway, the ATP-dependent amidation of deamido-NAD using L-glutamine as a nitrogen source. The sequence is that of Glutamine-dependent NAD(+) synthetase (NADSYN1) from Homo sapiens (Human).